A 190-amino-acid polypeptide reads, in one-letter code: FMN reductase (NADH) RutF (190 aa).

It belongs to the non-flavoprotein flavin reductase family. RutF subfamily.

The enzyme catalyses FMNH2 + NAD(+) = FMN + NADH + 2 H(+). In terms of biological role, catalyzes the reduction of FMN to FMNH2 which is used to reduce pyrimidine by RutA via the Rut pathway. This Pantoea ananatis (strain LMG 20103) protein is FMN reductase (NADH) RutF.